The chain runs to 97 residues: Large ribosomal subunit protein uL23 (97 aa).

Belongs to the universal ribosomal protein uL23 family. Part of the 50S ribosomal subunit. Contacts protein L29, and trigger factor when it is bound to the ribosome.

Its function is as follows. One of the early assembly proteins it binds 23S rRNA. One of the proteins that surrounds the polypeptide exit tunnel on the outside of the ribosome. Forms the main docking site for trigger factor binding to the ribosome. This is Large ribosomal subunit protein uL23 from Anaeromyxobacter dehalogenans (strain 2CP-C).